The sequence spans 112 residues: Colipase (112 aa).

The N-terminal stretch at 1–17 is a signal peptide; it reads MKVLVVLLVTLVAVAYA. Residues 18-22 constitute a propeptide, enterostatin, activation peptide; that stretch reads APGPR. 5 disulfides stabilise this stretch: Cys-34–Cys-45, Cys-40–Cys-56, Cys-44–Cys-78, Cys-66–Cys-86, and Cys-80–Cys-104.

This sequence belongs to the colipase family. As to quaternary structure, forms a 1:1 stoichiometric complex with pancreatic lipase. In terms of tissue distribution, expressed by the pancreas.

Its subcellular location is the secreted. Functionally, colipase is a cofactor of pancreatic lipase. It allows the lipase to anchor itself to the lipid-water interface. Without colipase the enzyme is washed off by bile salts, which have an inhibitory effect on the lipase. Enterostatin has a biological activity as a satiety signal. This Rattus norvegicus (Rat) protein is Colipase.